We begin with the raw amino-acid sequence, 449 residues long: CCA-adding enzyme (449 aa).

The ATP site is built by S57 and R60. The CTP site is built by S57 and R60. 3 residues coordinate Mg(2+): D69, D71, and D124. ATP contacts are provided by H147, K167, and Y176. Positions 147, 167, and 176 each coordinate CTP.

The protein belongs to the tRNA nucleotidyltransferase/poly(A) polymerase family. Archaeal CCA-adding enzyme subfamily. Homodimer. The cofactor is Mg(2+).

The catalysed reaction is a tRNA precursor + 2 CTP + ATP = a tRNA with a 3' CCA end + 3 diphosphate. It carries out the reaction a tRNA with a 3' CCA end + 2 CTP + ATP = a tRNA with a 3' CCACCA end + 3 diphosphate. Its function is as follows. Catalyzes the addition and repair of the essential 3'-terminal CCA sequence in tRNAs without using a nucleic acid template. Adds these three nucleotides in the order of C, C, and A to the tRNA nucleotide-73, using CTP and ATP as substrates and producing inorganic pyrophosphate. tRNA 3'-terminal CCA addition is required both for tRNA processing and repair. Also involved in tRNA surveillance by mediating tandem CCA addition to generate a CCACCA at the 3' terminus of unstable tRNAs. While stable tRNAs receive only 3'-terminal CCA, unstable tRNAs are marked with CCACCA and rapidly degraded. This chain is CCA-adding enzyme, found in Methanocaldococcus jannaschii (strain ATCC 43067 / DSM 2661 / JAL-1 / JCM 10045 / NBRC 100440) (Methanococcus jannaschii).